Consider the following 154-residue polypeptide: Lipoprotein signal peptidase (154 aa).

Helical transmembrane passes span 4–24 (IIIPIITILLIALDQLSKLWI), 62–82 (LFTLITIFVVGVAIIYLMKHI), and 84–104 (GSYWLLISLTLIISGGLGNFI). Active-site residues include aspartate 114 and aspartate 130. A helical transmembrane segment spans residues 125-145 (IFNVADSYLTIGIICLMIALW).

The protein belongs to the peptidase A8 family.

Its subcellular location is the cell membrane. It catalyses the reaction Release of signal peptides from bacterial membrane prolipoproteins. Hydrolyzes -Xaa-Yaa-Zaa-|-(S,diacylglyceryl)Cys-, in which Xaa is hydrophobic (preferably Leu), and Yaa (Ala or Ser) and Zaa (Gly or Ala) have small, neutral side chains.. It participates in protein modification; lipoprotein biosynthesis (signal peptide cleavage). In terms of biological role, this protein specifically catalyzes the removal of signal peptides from prolipoproteins. The protein is Lipoprotein signal peptidase of Streptococcus agalactiae serotype V (strain ATCC BAA-611 / 2603 V/R).